Here is a 1455-residue protein sequence, read N- to C-terminus: DNA-directed RNA polymerase subunit beta (1455 aa).

It belongs to the RNA polymerase beta chain family. The RNAP catalytic core consists of 2 alpha, 1 beta, 1 beta' and 1 omega subunit. When a sigma factor is associated with the core the holoenzyme is formed, which can initiate transcription.

It carries out the reaction RNA(n) + a ribonucleoside 5'-triphosphate = RNA(n+1) + diphosphate. Its function is as follows. DNA-dependent RNA polymerase catalyzes the transcription of DNA into RNA using the four ribonucleoside triphosphates as substrates. In Rhizorhabdus wittichii (strain DSM 6014 / CCUG 31198 / JCM 15750 / NBRC 105917 / EY 4224 / RW1) (Sphingomonas wittichii), this protein is DNA-directed RNA polymerase subunit beta.